The chain runs to 507 residues: Probable cytosol aminopeptidase (507 aa).

The Mn(2+) site is built by Lys-254 and Asp-259. Residue Lys-266 is part of the active site. 3 residues coordinate Mn(2+): Asp-277, Asp-336, and Glu-338. Arg-340 is a catalytic residue. The tract at residues 486–507 is disordered; the sequence is PRKAQPKARSAKRSKPVSRTRA. A compositionally biased stretch (basic residues) spans 489 to 507; the sequence is AQPKARSAKRSKPVSRTRA.

Belongs to the peptidase M17 family. Mn(2+) is required as a cofactor.

The protein localises to the cytoplasm. The catalysed reaction is Release of an N-terminal amino acid, Xaa-|-Yaa-, in which Xaa is preferably Leu, but may be other amino acids including Pro although not Arg or Lys, and Yaa may be Pro. Amino acid amides and methyl esters are also readily hydrolyzed, but rates on arylamides are exceedingly low.. The enzyme catalyses Release of an N-terminal amino acid, preferentially leucine, but not glutamic or aspartic acids.. Presumably involved in the processing and regular turnover of intracellular proteins. Catalyzes the removal of unsubstituted N-terminal amino acids from various peptides. The sequence is that of Probable cytosol aminopeptidase from Polaromonas sp. (strain JS666 / ATCC BAA-500).